We begin with the raw amino-acid sequence, 155 residues long: MPKYVEGKLNAEGLKFGIIVGRFNSFIGERLLEGALDALLRHGADDAQITVVRVPGAFEIPLTAQKMAGSGNYDALICLGAVIRGSTPHFDYVSSEVSKGIAHASLATGVPVAFGVLTTDTIEQAIERAGTKAGNKGFDAAMTVIEIANVFKEMK.

5-amino-6-(D-ribitylamino)uracil-binding positions include F23, 57-59 (AFE), and 81-83 (AVI). 86–87 (ST) contributes to the (2S)-2-hydroxy-3-oxobutyl phosphate binding site. H89 serves as the catalytic Proton donor. F114 serves as a coordination point for 5-amino-6-(D-ribitylamino)uracil. R128 contacts (2S)-2-hydroxy-3-oxobutyl phosphate.

Belongs to the DMRL synthase family.

The catalysed reaction is (2S)-2-hydroxy-3-oxobutyl phosphate + 5-amino-6-(D-ribitylamino)uracil = 6,7-dimethyl-8-(1-D-ribityl)lumazine + phosphate + 2 H2O + H(+). The protein operates within cofactor biosynthesis; riboflavin biosynthesis; riboflavin from 2-hydroxy-3-oxobutyl phosphate and 5-amino-6-(D-ribitylamino)uracil: step 1/2. In terms of biological role, catalyzes the formation of 6,7-dimethyl-8-ribityllumazine by condensation of 5-amino-6-(D-ribitylamino)uracil with 3,4-dihydroxy-2-butanone 4-phosphate. This is the penultimate step in the biosynthesis of riboflavin. This is 6,7-dimethyl-8-ribityllumazine synthase from Geobacter sp. (strain M21).